The sequence spans 154 residues: tRNA (cytidine(34)-2'-O)-methyltransferase (154 aa).

4 residues coordinate S-adenosyl-L-methionine: Leu78, Gly100, Leu122, and Ser130.

It belongs to the class IV-like SAM-binding methyltransferase superfamily. RNA methyltransferase TrmH family. TrmL subfamily. In terms of assembly, homodimer.

It localises to the cytoplasm. It carries out the reaction cytidine(34) in tRNA + S-adenosyl-L-methionine = 2'-O-methylcytidine(34) in tRNA + S-adenosyl-L-homocysteine + H(+). The enzyme catalyses 5-carboxymethylaminomethyluridine(34) in tRNA(Leu) + S-adenosyl-L-methionine = 5-carboxymethylaminomethyl-2'-O-methyluridine(34) in tRNA(Leu) + S-adenosyl-L-homocysteine + H(+). Functionally, methylates the ribose at the nucleotide 34 wobble position in the two leucyl isoacceptors tRNA(Leu)(CmAA) and tRNA(Leu)(cmnm5UmAA). Catalyzes the methyl transfer from S-adenosyl-L-methionine to the 2'-OH of the wobble nucleotide. This chain is tRNA (cytidine(34)-2'-O)-methyltransferase, found in Methylovorus glucosotrophus (strain SIP3-4).